Consider the following 185-residue polypeptide: Ribosome-recycling factor (185 aa).

It belongs to the RRF family.

It localises to the cytoplasm. Responsible for the release of ribosomes from messenger RNA at the termination of protein biosynthesis. May increase the efficiency of translation by recycling ribosomes from one round of translation to another. The sequence is that of Ribosome-recycling factor from Chloroflexus aggregans (strain MD-66 / DSM 9485).